The following is a 473-amino-acid chain: Fumarate hydratase class II 2 (473 aa).

The disordered stretch occupies residues 1–28; the sequence is MAKSARTKTARPATRTETDSFGPIEVPS. Substrate contacts are provided by residues 108-110, 139-142, 149-151, and Thr197; these read SGT, HPND, and SSN. The Proton donor/acceptor role is filled by His198. Ser328 is an active-site residue. Residues Ser329 and 334 to 336 each bind substrate; that span reads KVN.

It belongs to the class-II fumarase/aspartase family. Fumarase subfamily. As to quaternary structure, homotetramer.

It is found in the cytoplasm. It catalyses the reaction (S)-malate = fumarate + H2O. The protein operates within carbohydrate metabolism; tricarboxylic acid cycle; (S)-malate from fumarate: step 1/1. Its function is as follows. Involved in the TCA cycle. Catalyzes the stereospecific interconversion of fumarate to L-malate. The polypeptide is Fumarate hydratase class II 2 (Bradyrhizobium diazoefficiens (strain JCM 10833 / BCRC 13528 / IAM 13628 / NBRC 14792 / USDA 110)).